Reading from the N-terminus, the 213-residue chain is Protein-L-isoaspartate O-methyltransferase (213 aa).

The active site involves serine 62.

The protein belongs to the methyltransferase superfamily. L-isoaspartyl/D-aspartyl protein methyltransferase family.

The protein resides in the cytoplasm. The catalysed reaction is [protein]-L-isoaspartate + S-adenosyl-L-methionine = [protein]-L-isoaspartate alpha-methyl ester + S-adenosyl-L-homocysteine. In terms of biological role, catalyzes the methyl esterification of L-isoaspartyl residues in peptides and proteins that result from spontaneous decomposition of normal L-aspartyl and L-asparaginyl residues. It plays a role in the repair and/or degradation of damaged proteins. The sequence is that of Protein-L-isoaspartate O-methyltransferase from Idiomarina loihiensis (strain ATCC BAA-735 / DSM 15497 / L2-TR).